The chain runs to 514 residues: Maturase K (514 aa).

Belongs to the intron maturase 2 family. MatK subfamily.

Its subcellular location is the plastid. The protein localises to the chloroplast. Its function is as follows. Usually encoded in the trnK tRNA gene intron. Probably assists in splicing its own and other chloroplast group II introns. The protein is Maturase K of Tsuga canadensis (Eastern hemlock).